A 454-amino-acid chain; its full sequence is NADP-specific glutamate dehydrogenase (454 aa).

Ser2 is subject to N-acetylserine. The active site involves Lys114.

The protein belongs to the Glu/Leu/Phe/Val dehydrogenases family. Homohexamer.

The catalysed reaction is L-glutamate + NADP(+) + H2O = 2-oxoglutarate + NH4(+) + NADPH + H(+). The protein is NADP-specific glutamate dehydrogenase (GDH) of Neurospora sitophila (Chrysonilia sitophila).